The sequence spans 122 residues: Large ribosomal subunit protein uL14 (122 aa).

This sequence belongs to the universal ribosomal protein uL14 family. In terms of assembly, part of the 50S ribosomal subunit. Forms a cluster with proteins L3 and L19. In the 70S ribosome, L14 and L19 interact and together make contacts with the 16S rRNA in bridges B5 and B8.

Functionally, binds to 23S rRNA. Forms part of two intersubunit bridges in the 70S ribosome. The sequence is that of Large ribosomal subunit protein uL14 from Ureaplasma parvum serovar 3 (strain ATCC 27815 / 27 / NCTC 11736).